A 500-amino-acid chain; its full sequence is Vitamin D(3) 25-hydroxylase (500 aa).

C446 contacts heme.

This sequence belongs to the cytochrome P450 family. It depends on heme as a cofactor. Found in liver and kidney.

The protein resides in the endoplasmic reticulum membrane. It is found in the microsome membrane. It catalyses the reaction calciol + reduced [NADPH--hemoprotein reductase] + O2 = calcidiol + oxidized [NADPH--hemoprotein reductase] + H2O + H(+). It carries out the reaction alfacalcidol + reduced [NADPH--hemoprotein reductase] + O2 = calcitriol + oxidized [NADPH--hemoprotein reductase] + H2O + H(+). The enzyme catalyses dodecanoate + reduced [NADPH--hemoprotein reductase] + O2 = 12-hydroxydodecanoate + oxidized [NADPH--hemoprotein reductase] + H2O + H(+). The catalysed reaction is dodecanoate + reduced [NADPH--hemoprotein reductase] + O2 = 11-hydroxydodecanoate + oxidized [NADPH--hemoprotein reductase] + H2O + H(+). It catalyses the reaction 5beta-cholestane-3alpha,7alpha-diol + reduced [NADPH--hemoprotein reductase] + O2 = 5beta-cholestane-3alpha,7alpha,25-triol + oxidized [NADPH--hemoprotein reductase] + H2O + H(+). It carries out the reaction 5beta-cholestane-3alpha,7alpha,12alpha-triol + reduced [NADPH--hemoprotein reductase] + O2 = 5beta-cholestane-3alpha,7alpha,12alpha,25-tetrol + oxidized [NADPH--hemoprotein reductase] + H2O + H(+). Catalyzes the 25-hydroxylation of vitamin D(3) (calciol), 1alpha-hydroxyvitamin D(3) (alphacalcidiol) and some C27 steroids. In addition the enzyme catalyzes the hydroxylation of positions 11 and 12 of dodecanoate. The chain is Vitamin D(3) 25-hydroxylase (CYP2D25) from Sus scrofa (Pig).